Here is a 604-residue protein sequence, read N- to C-terminus: UvrABC system protein C (604 aa).

In terms of domain architecture, GIY-YIG spans 10-89 (ELPGVYLMKD…VKKNRPHYNI (80 aa)). The UVR domain maps to 199 to 234 (SGTIKELQEKMNIHAIAQEYESAAVIRDQIDALKSL).

It belongs to the UvrC family. As to quaternary structure, interacts with UvrB in an incision complex.

It localises to the cytoplasm. In terms of biological role, the UvrABC repair system catalyzes the recognition and processing of DNA lesions. UvrC both incises the 5' and 3' sides of the lesion. The N-terminal half is responsible for the 3' incision and the C-terminal half is responsible for the 5' incision. The protein is UvrABC system protein C of Methanococcoides burtonii (strain DSM 6242 / NBRC 107633 / OCM 468 / ACE-M).